A 272-amino-acid chain; its full sequence is 2-dehydro-3-deoxyphosphooctonate aldolase (272 aa).

Belongs to the KdsA family.

Its subcellular location is the cytoplasm. It catalyses the reaction D-arabinose 5-phosphate + phosphoenolpyruvate + H2O = 3-deoxy-alpha-D-manno-2-octulosonate-8-phosphate + phosphate. It functions in the pathway carbohydrate biosynthesis; 3-deoxy-D-manno-octulosonate biosynthesis; 3-deoxy-D-manno-octulosonate from D-ribulose 5-phosphate: step 2/3. The protein operates within bacterial outer membrane biogenesis; lipopolysaccharide biosynthesis. The protein is 2-dehydro-3-deoxyphosphooctonate aldolase of Geobacter sulfurreducens (strain ATCC 51573 / DSM 12127 / PCA).